A 208-amino-acid chain; its full sequence is Small ribosomal subunit protein eS8 (208 aa).

The disordered stretch occupies residues 1 to 27 (MGISRDNWHKRRRTGGKRKPVHKKRKY). Basic residues predominate over residues 8–26 (WHKRRRTGGKRKPVHKKRK).

Belongs to the eukaryotic ribosomal protein eS8 family. As to quaternary structure, component of the small ribosomal subunit. Identified in a IGF2BP1-dependent mRNP granule complex containing untranslated mRNAs. Part of the small subunit (SSU) processome, composed of more than 70 proteins and the RNA chaperone small nucleolar RNA (snoRNA) U3.

The protein resides in the cytoplasm. It is found in the membrane. Its subcellular location is the nucleus. It localises to the nucleolus. Its function is as follows. Component of the small ribosomal subunit. The ribosome is a large ribonucleoprotein complex responsible for the synthesis of proteins in the cell. Part of the small subunit (SSU) processome, first precursor of the small eukaryotic ribosomal subunit. During the assembly of the SSU processome in the nucleolus, many ribosome biogenesis factors, an RNA chaperone and ribosomal proteins associate with the nascent pre-rRNA and work in concert to generate RNA folding, modifications, rearrangements and cleavage as well as targeted degradation of pre-ribosomal RNA by the RNA exosome. This chain is Small ribosomal subunit protein eS8 (rps8), found in Danio rerio (Zebrafish).